A 312-amino-acid polypeptide reads, in one-letter code: Ribosomal protein uL3 glutamine methyltransferase (312 aa).

It belongs to the protein N5-glutamine methyltransferase family. PrmB subfamily.

The catalysed reaction is L-glutaminyl-[ribosomal protein uL3] + S-adenosyl-L-methionine = N(5)-methyl-L-glutaminyl-[ribosomal protein uL3] + S-adenosyl-L-homocysteine + H(+). In terms of biological role, methylates large ribosomal subunit protein uL3 on a specific glutamine residue. The polypeptide is Ribosomal protein uL3 glutamine methyltransferase (Xylella fastidiosa (strain 9a5c)).